A 128-amino-acid chain; its full sequence is uncharacterized protein (128 aa).

This is an uncharacterized protein from Homo sapiens (Human).